Here is a 1047-residue protein sequence, read N- to C-terminus: Ubiquitin carboxyl-terminal hydrolase 48 (1047 aa).

The USP domain maps to 89 to 416 (VGLTNLGATC…NAYMLVYKQQ (328 aa)). C98 (nucleophile) is an active-site residue. The Proton acceptor role is filled by H348. 3 consecutive DUSP domains span residues 457 to 551 (QSVD…RSSL), 567 to 697 (NQLN…DHDP), and 717 to 830 (MMAN…RIHD). Positions 609 to 647 (LEEDEEETKHNNSKINGEKSSPGTKADGVKGDSEDGDGE) are disordered. Positions 621–631 (SKINGEKSSPG) are enriched in polar residues. The segment covering 635-647 (DGVKGDSEDGDGE) has biased composition (basic and acidic residues). Residues 887–928 (PEFSVSGSDVEDEKEEPKLDGEKDPDFSQTEGGAKRQKLNDT) are disordered. Residues 901-912 (EEPKLDGEKDPD) show a composition bias toward basic and acidic residues. A Ubiquitin-like domain is found at 961-1012 (VSANQTLKDLKIQIMHAFSVAPFDQNLSIDGRCLKDDSATLGSLGVIPESII).

The protein belongs to the peptidase C19 family.

It is found in the cytoplasm. The protein resides in the nucleus. The catalysed reaction is Thiol-dependent hydrolysis of ester, thioester, amide, peptide and isopeptide bonds formed by the C-terminal Gly of ubiquitin (a 76-residue protein attached to proteins as an intracellular targeting signal).. Recognizes and hydrolyzes the peptide bond at the C-terminal Gly of ubiquitin. Involved in the processing of poly-ubiquitin precursors as well as that of ubiquitinated proteins. This Danio rerio (Zebrafish) protein is Ubiquitin carboxyl-terminal hydrolase 48 (usp48).